Reading from the N-terminus, the 219-residue chain is Orotate phosphoribosyltransferase (219 aa).

Lys26 contributes to the 5-phospho-alpha-D-ribose 1-diphosphate binding site. 34–35 (FF) contributes to the orotate binding site. Residues 72–73 (YK), Arg98, Lys99, Lys102, His104, and 124–132 (DDVITAGTA) contribute to the 5-phospho-alpha-D-ribose 1-diphosphate site. Orotate-binding residues include Thr128 and Arg156.

It belongs to the purine/pyrimidine phosphoribosyltransferase family. PyrE subfamily. Homodimer. Mg(2+) serves as cofactor.

It catalyses the reaction orotidine 5'-phosphate + diphosphate = orotate + 5-phospho-alpha-D-ribose 1-diphosphate. The protein operates within pyrimidine metabolism; UMP biosynthesis via de novo pathway; UMP from orotate: step 1/2. Functionally, catalyzes the transfer of a ribosyl phosphate group from 5-phosphoribose 1-diphosphate to orotate, leading to the formation of orotidine monophosphate (OMP). This chain is Orotate phosphoribosyltransferase, found in Stenotrophomonas maltophilia (strain R551-3).